The chain runs to 264 residues: 4-hydroxy-tetrahydrodipicolinate reductase (264 aa).

10–15 is a binding site for NAD(+); it reads GCLGRQ. R37 contributes to the NADP(+) binding site. NAD(+) is bound by residues 99–101 and 121–124; these read GTT and SANL. Residue H153 is the Proton donor/acceptor of the active site. H154 is a (S)-2,3,4,5-tetrahydrodipicolinate binding site. The active-site Proton donor is K157. (S)-2,3,4,5-tetrahydrodipicolinate is bound at residue 163-164; sequence GT.

The protein belongs to the DapB family.

It is found in the cytoplasm. It catalyses the reaction (S)-2,3,4,5-tetrahydrodipicolinate + NAD(+) + H2O = (2S,4S)-4-hydroxy-2,3,4,5-tetrahydrodipicolinate + NADH + H(+). The catalysed reaction is (S)-2,3,4,5-tetrahydrodipicolinate + NADP(+) + H2O = (2S,4S)-4-hydroxy-2,3,4,5-tetrahydrodipicolinate + NADPH + H(+). The protein operates within amino-acid biosynthesis; L-lysine biosynthesis via DAP pathway; (S)-tetrahydrodipicolinate from L-aspartate: step 4/4. Its function is as follows. Catalyzes the conversion of 4-hydroxy-tetrahydrodipicolinate (HTPA) to tetrahydrodipicolinate. The polypeptide is 4-hydroxy-tetrahydrodipicolinate reductase (Ehrlichia ruminantium (strain Gardel)).